A 357-amino-acid polypeptide reads, in one-letter code: uncharacterized protein (357 aa).

A disordered region spans residues S120–P145.

This is an uncharacterized protein from Caenorhabditis elegans.